We begin with the raw amino-acid sequence, 374 residues long: Nucleosome assembly protein 1;3 (374 aa).

Residues 26 to 80 (VNALKNKLQNLAGQHSDVLENLTPKIRRRVEVLREIQGKHDEIETKFREERAALE) are a coiled coil. Ser-41 carries the phosphoserine modification. Residues 47-62 (LTPKIRRRVEVLREIQ) carry the Nuclear export signal motif. Residues 222–227 (KKKPKK) carry the Nuclear localization signal motif. The span at 299–339 (IEGEEFEIDNDDEDDIDEDEDEDEEDEDEDEEEDDEDEEEE) shows a compositional bias: acidic residues. Residues 299–374 (IEGEEFEIDN…GERPPECKQQ (76 aa)) are disordered. Basic residues predominate over residues 343-355 (TKKKPSVLHKKGG). Positions 364–374 (QGERPPECKQQ) are enriched in basic and acidic residues. A Cysteine methyl ester modification is found at Cys-371. A lipid anchor (S-farnesyl cysteine) is attached at Cys-371. A propeptide spans 372–374 (KQQ) (removed in mature form).

The protein belongs to the nucleosome assembly protein (NAP) family. As to quaternary structure, can form homomeric and heteromeric protein complexes with NAP1;1, NAP1;2 and NAP1;4. Binds histone H2A and associates with chromatin in vivo. Ubiquitous.

Its subcellular location is the nucleus. It is found in the cytoplasm. In terms of biological role, may modulate chromatin structure by regulation of nucleosome assembly/disassembly. May function in nucleotide excision repair (NER). Involved in somatic homologous recombination. Could be involved in response to abscisic acid (ABA) and to salt stress. This is Nucleosome assembly protein 1;3 (NAP1;3) from Arabidopsis thaliana (Mouse-ear cress).